We begin with the raw amino-acid sequence, 428 residues long: MRKINSALKPLKGDVSVDADKSISHRAVIFSALAPGKSIIKNFLQANDTLSSCSCLRQLGIKIAAMDSEMQVYGRGLSGFSEPHTVLDCGNSGTTMRLMAGLLSAQPFLSILNGDESLNQRPMKRIIEPLGIMGANIQARQNGNYPPLVIRGNRLSGLSYQLPVASAQVKSALMLAALNADSETLLSEPQKTRDHSERMLTAMGADIAVNGLEIRLKPGKELQATEFLVPGDISSAAFFMVAASIIPGSELLIRHVGVNPSRAGIIEILNEMGARIKLENERTISGEPVADLIVSHSRLQAIDIDGAVIPRLIDEIPILAVAMALAEGESTVRGAAELRVKETDRIAAISTELAKMGADIRERSDGFVIKGKPDSLKGGRVASKGDHRIAMSLAVAALAAKGESVIEDSEVVNISFPRFWDLLNTLTS.

The 3-phosphoshikimate site is built by Lys21, Ser22, and Arg26. Lys21 contacts phosphoenolpyruvate. Phosphoenolpyruvate-binding residues include Gly93 and Arg121. 3-phosphoshikimate is bound by residues Ser166, Gln168, Asp314, and Lys341. Gln168 is a binding site for phosphoenolpyruvate. Asp314 (proton acceptor) is an active-site residue. Phosphoenolpyruvate-binding residues include Arg345 and Arg388.

The protein belongs to the EPSP synthase family. Monomer.

The protein resides in the cytoplasm. The catalysed reaction is 3-phosphoshikimate + phosphoenolpyruvate = 5-O-(1-carboxyvinyl)-3-phosphoshikimate + phosphate. The protein operates within metabolic intermediate biosynthesis; chorismate biosynthesis; chorismate from D-erythrose 4-phosphate and phosphoenolpyruvate: step 6/7. In terms of biological role, catalyzes the transfer of the enolpyruvyl moiety of phosphoenolpyruvate (PEP) to the 5-hydroxyl of shikimate-3-phosphate (S3P) to produce enolpyruvyl shikimate-3-phosphate and inorganic phosphate. In Syntrophomonas wolfei subsp. wolfei (strain DSM 2245B / Goettingen), this protein is 3-phosphoshikimate 1-carboxyvinyltransferase.